The following is a 402-amino-acid chain: Multidrug resistance protein MdtH (402 aa).

Residues 1 to 12 (MSRVSQARNLGK) lie on the Cytoplasmic side of the membrane. The helical transmembrane segment at 13-33 (YFLLIDNMLVVLGFFVVFPLI) threads the bilayer. Residues 34 to 98 (SIRFVDQMGW…GFATMGIAHE (65 aa)) lie on the Periplasmic side of the membrane. A helical membrane pass occupies residues 99–116 (PWLLWFSCLLSGLGGTLF). The Cytoplasmic portion of the chain corresponds to 117-138 (DPPRSALVVKLIRPQQRGRFFS). Residues 139-159 (LLMMQDSAGAVIGALLGSWLL) form a helical membrane-spanning segment. The Periplasmic portion of the chain corresponds to 160–164 (QYDFR). Residues 165 to 185 (LVCATGAVLFVLCAAFNAWLL) traverse the membrane as a helical segment. At 186–213 (PAWKLSTVRTPVREGMTRVMRDKRFVTY) the chain is on the cytoplasmic side. The chain crosses the membrane as a helical span at residues 214–234 (VLTLAGYYMLAVQVMLMLPIM). Residues 235–243 (VNDVAGAPS) lie on the Periplasmic side of the membrane. Residues 244 to 264 (AVKWMYAIEACLSLTLLYPIA) form a helical membrane-spanning segment. At 265–276 (RWSEKHFRLEHR) the chain is on the cytoplasmic side. Residues 277–297 (LMAGLLIMSLSMMPVGMVSGL) form a helical membrane-spanning segment. Topologically, residues 298-299 (QQ) are periplasmic. Residues 300–320 (LFTLICLFYIGSIIAEPARET) traverse the membrane as a helical segment. Residues 321–339 (LSASLADARARGSYMGFSR) lie on the Cytoplasmic side of the membrane. The chain crosses the membrane as a helical span at residues 340 to 360 (LGLAIGGAIGYIGGGWLFDLG). Residues 361–367 (KSAHQPE) lie on the Periplasmic side of the membrane. Residues 368–388 (LPWMMLGIIGIFTFLALGWQF) form a helical membrane-spanning segment. At 389–402 (SQKRTARRLLERDA) the chain is on the cytoplasmic side.

The protein belongs to the major facilitator superfamily. DHA1 family. MdtH (TC 2.A.1.2.21) subfamily.

The protein localises to the cell inner membrane. Confers resistance to norfloxacin and enoxacin. This Escherichia coli O7:K1 (strain IAI39 / ExPEC) protein is Multidrug resistance protein MdtH.